A 525-amino-acid chain; its full sequence is Peptide chain release factor 3 (525 aa).

The tr-type G domain maps to 9–276; it reads AKRRTFAIIS…GFTRYAPAPQ (268 aa). Residues 18–25, 86–90, and 140–143 each bind GTP; these read SHPDAGKT, DTPGH, and NKFD.

Belongs to the TRAFAC class translation factor GTPase superfamily. Classic translation factor GTPase family. PrfC subfamily.

It is found in the cytoplasm. Increases the formation of ribosomal termination complexes and stimulates activities of RF-1 and RF-2. It binds guanine nucleotides and has strong preference for UGA stop codons. It may interact directly with the ribosome. The stimulation of RF-1 and RF-2 is significantly reduced by GTP and GDP, but not by GMP. This chain is Peptide chain release factor 3, found in Francisella tularensis subsp. novicida (strain U112).